The primary structure comprises 332 residues: RNA polymerase principal sigma factor HrdD (332 aa).

The span at 1–11 (MATRAVARRKS) shows a compositional bias: basic residues. The tract at residues 1 to 25 (MATRAVARRKSAAGETSGSATSVRA) is disordered. The span at 13 to 22 (AGETSGSATS) shows a compositional bias: low complexity. The Polymerase core binding signature appears at 124 to 137 (DLIQEGNAGLVRAV). Positions 294–313 (LTEVGKEHGLTRERIRQIEK) form a DNA-binding region, H-T-H motif.

This sequence belongs to the sigma-70 factor family. Interacts transiently with the RNA polymerase catalytic core.

Its function is as follows. Sigma factors are initiation factors that promote the attachment of RNA polymerase to specific initiation sites and are then released. The chain is RNA polymerase principal sigma factor HrdD (hrdD) from Streptomyces coelicolor (strain ATCC BAA-471 / A3(2) / M145).